The sequence spans 240 residues: 4-hydroxy-tetrahydrodipicolinate reductase (240 aa).

NAD(+) contacts are provided by residues 79 to 81 and 103 to 106; these read ATT and SANM. His-135 acts as the Proton donor/acceptor in catalysis. (S)-2,3,4,5-tetrahydrodipicolinate is bound at residue His-136. Lys-139 functions as the Proton donor in the catalytic mechanism. 145-146 contributes to the (S)-2,3,4,5-tetrahydrodipicolinate binding site; the sequence is GT.

This sequence belongs to the DapB family.

The protein resides in the cytoplasm. It catalyses the reaction (S)-2,3,4,5-tetrahydrodipicolinate + NAD(+) + H2O = (2S,4S)-4-hydroxy-2,3,4,5-tetrahydrodipicolinate + NADH + H(+). The catalysed reaction is (S)-2,3,4,5-tetrahydrodipicolinate + NADP(+) + H2O = (2S,4S)-4-hydroxy-2,3,4,5-tetrahydrodipicolinate + NADPH + H(+). Its pathway is amino-acid biosynthesis; L-lysine biosynthesis via DAP pathway; (S)-tetrahydrodipicolinate from L-aspartate: step 4/4. Functionally, catalyzes the conversion of 4-hydroxy-tetrahydrodipicolinate (HTPA) to tetrahydrodipicolinate. In Staphylococcus aureus (strain Mu3 / ATCC 700698), this protein is 4-hydroxy-tetrahydrodipicolinate reductase.